The chain runs to 685 residues: Transforming growth factor beta activator LRRC33 (685 aa).

Positions 1–27 are cleaved as a signal peptide; the sequence is MPVCGCLSVVLSHAVVLLMLVLHSASG. Topologically, residues 28-640 are extracellular; sequence HPQTFPCRLI…CGFTNNNKES (613 aa). The LRRNT domain occupies 29–56; it reads PQTFPCRLIQRVALCSGRQLSVIPDCLP. LRR repeat units follow at residues 57-79, 80-102, 103-129, 130-154, 155-178, 180-201, and 202-225; these read HETE…LSRY, PFLR…AFIE, SHLL…AFRS, LTQL…LVAN, LSSL…TFRD, HQLK…AFDH, and MKKL…EMTQ. Asn154 carries an N-linked (GlcNAc...) asparagine glycan. Residues Asn230 and Asn244 are each glycosylated (N-linked (GlcNAc...) asparagine). LRR repeat units lie at residues 248 to 271 and 273 to 296; these read TFQL…PTNN and IRTL…TSSN. N-linked (GlcNAc...) asparagine glycosylation is found at Asn291, Asn296, Asn309, Asn312, and Asn325. LRR repeat units lie at residues 326 to 349, 351 to 373, 374 to 397, 400 to 423, 425 to 447, 457 to 480, 482 to 503, 505 to 526, 527 to 549, 551 to 571, and 573 to 596; these read LSSV…FIKQ, PQLY…SEDL, PVTI…QTSK, LNNL…IFTS, PNLN…NYMG, MASL…AFKG, SLTH…SLKG, ANTL…FSPY, TNLK…LMAL, LKLL…HASL, and AKKL…WFRT. N-linked (GlcNAc...) asparagine glycosylation is found at Asn402 and Asn407. Residue Asn533 is glycosylated (N-linked (GlcNAc...) asparagine). One can recognise an LRRCT domain in the interval 597–635; the sequence is FGENKGIHVADLSEITCLDLNYRRHKVVLTDAVYCGFTN. Residues 641–661 form a helical membrane-spanning segment; the sequence is VVWYILLFVTVSVSIMGISVI. The Cytoplasmic portion of the chain corresponds to 662 to 685; sequence YMLTFKPRMLPRVIKKKCWRPTSY.

The protein belongs to the LRRC32/LRRC33 family.

The protein localises to the cell membrane. It is found in the endoplasmic reticulum membrane. Functionally, key regulator of transforming growth factor beta-1 (TGFB1) specifically required for microglia function in the nervous system. Required for activation of latent TGF-beta-1 in macrophages and microglia: associates specifically via disulfide bonds with the Latency-associated peptide (LAP), which is the regulatory chain of TGFB1, and regulates integrin-dependent activation of TGF-beta-1. TGF-beta-1 activation mediated by lrrc33/nrros is highly localized: there is little spreading of TGF-beta-1 activated from one microglial cell to neighboring microglia, suggesting the existence of localized and selective activation of TGF-beta-1 by lrrc33/nrros. The chain is Transforming growth factor beta activator LRRC33 from Danio rerio (Zebrafish).